The following is a 95-amino-acid chain: Cell division topological specificity factor (95 aa).

This sequence belongs to the MinE family.

In terms of biological role, prevents the cell division inhibition by proteins MinC and MinD at internal division sites while permitting inhibition at polar sites. This ensures cell division at the proper site by restricting the formation of a division septum at the midpoint of the long axis of the cell. The protein is Cell division topological specificity factor of Methylorubrum extorquens (strain CM4 / NCIMB 13688) (Methylobacterium extorquens).